The primary structure comprises 610 residues: MSEVFDSKSFLKTVTSQPGVYRMYDASGTVIYVGKAKDLKKRLSSYFRSNLASRKTEALVAQIHNIDVTVTHTETEALLLEHNYIKLYQPRYNVLLRDDKSYPYIFLSGDTHPRLAIHRGAKHAKGEYFGPFPNGYAVRETLALLQKIFPIRQCENSVYRNRSRPCLQYQIGRCLGPCVEGLVSEEDYAQQVEYVRLFLAGKDDQVINQLVSRMEQASQNLAFEEAARLRDQIQAVRRVTEKQFVSNNGDDLDVIGVAFESGMACLHVLFIRQGKVLGSRSYYPKVPNGTELAEVVETFVGQFYLQGSQMRTLPGEILLDFPLTTPELLAETLTEIAGRRVNVQTRPRGDRARYLKLARTNAATALTTRLSQQSTISQRLTALAQALHLPEIKRMECFDISHTMGEQTVASCVVFDANGPLRAEYRRYNITGITPGDDYAAMNQVLRRRYGKAIEESKVPDIILIDGGKGQLGQAKSVFAELDVPWDKHHPLLLGVAKGSDRKAGLETLFLEPEGEGFALPPDSPALHVIQHIRDESHNHAITGHRKKRAKVKNTSTLETIEGIGPKRRQMLLKYMGGLQPLLNASVEEIAKVPGISQALAEKIYYSLKH.

The 79-residue stretch at 16–94 (SQPGVYRMYD…IKLYQPRYNV (79 aa)) folds into the GIY-YIG domain. Residues 204 to 239 (DQVINQLVSRMEQASQNLAFEEAARLRDQIQAVRRV) enclose the UVR domain.

This sequence belongs to the UvrC family. As to quaternary structure, interacts with UvrB in an incision complex.

The protein localises to the cytoplasm. Functionally, the UvrABC repair system catalyzes the recognition and processing of DNA lesions. UvrC both incises the 5' and 3' sides of the lesion. The N-terminal half is responsible for the 3' incision and the C-terminal half is responsible for the 5' incision. The polypeptide is UvrABC system protein C (Cronobacter sakazakii (strain ATCC BAA-894) (Enterobacter sakazakii)).